A 172-amino-acid chain; its full sequence is Immune protein Tsi1 (172 aa).

A signal peptide spans 1–19 (MKLLAGSFAALFLSLSAQA). Disulfide bonds link C22/C167, C79/C121, and C147/C155.

Forms a heterotetramer with Tse1 consisting of two Tse1 dimers and two Tsi1 dimers. Formation of the complex inactivates Tse1 enzymatic activity.

Functionally, immunity protein that plays a role in preventing early activation of toxin Tse1. Binds to a large surface of Tse1 and thereby occludes the active site to specifically inhibits enzyme activity by forming a hydrogen bond with the catalytic diad. The chain is Immune protein Tsi1 from Pseudomonas aeruginosa (strain ATCC 15692 / DSM 22644 / CIP 104116 / JCM 14847 / LMG 12228 / 1C / PRS 101 / PAO1).